An 89-amino-acid polypeptide reads, in one-letter code: Small ribosomal subunit protein uS14 (89 aa).

The segment at 32–51 is disordered; the sequence is DYEGLQKLPKNSSPVRLHNR.

The protein belongs to the universal ribosomal protein uS14 family. In terms of assembly, part of the 30S ribosomal subunit. Contacts proteins S3 and S10.

Binds 16S rRNA, required for the assembly of 30S particles and may also be responsible for determining the conformation of the 16S rRNA at the A site. This is Small ribosomal subunit protein uS14 from Christiangramia forsetii (strain DSM 17595 / CGMCC 1.15422 / KT0803) (Gramella forsetii).